Consider the following 4903-residue polypeptide: Histone-lysine N-methyltransferase 2C (4903 aa).

Disordered regions lie at residues 1-116 (MSSE…SEES) and 159-202 (LTLP…PPQQ). A compositionally biased stretch (pro residues) spans 13-28 (QPPPAPPEEPGAPAPS). 2 positions are modified to phosphoserine: Ser-28 and Ser-46. The a.T hook DNA-binding region spans 34–46 (KRPRGRPRKDGAS). The span at 50 to 59 (RARKKPRSRG) shows a compositional bias: basic residues. A compositionally biased stretch (acidic residues) spans 64–81 (EDEDSMDGLETTETENIV). Phosphoserine is present on residues Ser-89 and Ser-113. Residues 101 to 116 (SKQPVSALQRSVSEES) are compositionally biased toward polar residues. A C2HC pre-PHD-type 1; degenerate zinc finger spans residues 226–261 (ELSLVGLPDAIDVQALFDSTGTCWAHHRCVEWSLGI). PHD-type zinc fingers lie at residues 282-330 (ERCA…PEHI), 340-390 (DANC…CKVC), 387-437 (CKVC…CRIC), and 463-519 (DNLC…CKHL). Residues 343–388 (CAVCDSPGDLLDQFFCTTCGQHYHGMCLDIAVTPLKRAGWQCPECK) form an RING-type zinc finger. The region spanning 435–488 (RICIECGTRSSTQWHHNCLICDTCYQQQDNLCPFCGKCYHPELQKDMLHCNMCK) is the DHHC domain. The interval 671 to 703 (SEVASKELSPPKSAPETAAPEALLSPHSERSLS) is disordered. The residue at position 751 (Lys-751) is an N6-acetyllysine. Residues 824-835 (TKRKFSPGRPRS) show a composition bias toward basic residues. Disordered stretches follow at residues 824–857 (TKRKFSPGRPRSKQGAWSNHNTVSPPSWAPDTSE) and 882–904 (GFPGKRRPRGAGLSGRGGRGRSK). The segment covering 838 to 848 (GAWSNHNTVSP) has biased composition (polar residues). Ser-847 carries the phosphoserine modification. PHD-type zinc fingers lie at residues 950-1003 (QDMC…CTVC), 1000-1050 (CTVC…CVWC), and 1077-1132 (LSSC…CRPY). The interval 1208 to 1318 (AVLQTPPDIQ…PSRDDGWREQ (111 aa)) is disordered. Residues 1217–1263 (QSEHSRDGEMDDSREGELMDCDGKSESSPEREAGDDETKGIEGTDAI) are compositionally biased toward basic and acidic residues. Ser-1294 is modified (phosphoserine). Over residues 1309–1318 (PSRDDGWREQ) the composition is skewed to basic and acidic residues. The stretch at 1330 to 1352 (VAENTDKIKKRYRKRKNKLEETF) forms a coiled coil. Disordered stretches follow at residues 1397 to 1419 (SDPLLSSSSTSAKPGTQGTADDP) and 1447 to 1473 (HSDIGPTTADASSLPQPGVSQSSRPLT). Composition is skewed to polar residues over residues 1406–1415 (TSAKPGTQGT) and 1455–1471 (ADASSLPQPGVSQSSRP). An N6-acetyllysine modification is found at Lys-1497. 2 disordered regions span residues 1594 to 1617 (NAIASDPNSSWAPTTPSMEGENDT) and 1698 to 1757 (VQMS…AKIE). Over residues 1599-1617 (DPNSSWAPTTPSMEGENDT) the composition is skewed to polar residues. Positions 1707 to 1717 (RQQQQDSIDPS) are enriched in low complexity. A compositionally biased stretch (basic and acidic residues) spans 1718–1742 (SRIDSDLFKDPLKQRESEHEQEWKF). Residues 1743–1790 (RQQMRQKSKQQAKIEATQKLEQVKNEQQQQQQQQQQQQQQQLASQHLL) are a coiled coil. At Lys-1761 the chain carries N6-acetyllysine. Residues 1791-2375 (VAPGSDTPSS…MSQADTEKLR (585 aa)) are disordered. Residues 1796–1819 (DTPSSGAQSPLTPQAGNGNVSPAQ) show a composition bias toward polar residues. Over residues 1855–1886 (PSRIPVQESLSQSQNSQPPSPQMFSPGSSHSR) the composition is skewed to low complexity. A Phosphoserine modification is found at Ser-1983. The span at 1986–2001 (ISEQSTKGPLTTGTSD) shows a compositional bias: polar residues. The residue at position 2005 (Lys-2005) is an N6-acetyllysine. Polar residues-rich tracts occupy residues 2113 to 2124 (GTISRSASQDPY), 2137 to 2151 (SYSQTSGTARSNPDP), and 2325 to 2334 (GNFSTSSNLP). Low complexity predominate over residues 2335–2347 (VSSQGQQFSSVSQ). Positions 2355–2369 (SGGTDTQNTVNMSQA) are enriched in polar residues. Asymmetric dimethylarginine occurs at positions 2447 and 2563. 3 disordered regions span residues 2561 to 2668 (RSRL…DNLE), 2702 to 2736 (KDLDDEDLENLNLDTEDGKGDDLDTLDNLETNDPN), and 2786 to 2844 (VEPK…GDAD). 3 stretches are compositionally biased toward polar residues: residues 2602-2611 (QPSQCLSNQL), 2621-2636 (PPSQQEQGHPAHQSSI), and 2653-2668 (PLSTSTPAETSPDNLE). The segment covering 2788–2807 (PKTRDQGDKTMVLEDKDLPQ) has biased composition (basic and acidic residues). 2 positions are modified to N6-acetyllysine: Lys-2796 and Lys-2803. At Ser-2822 the chain carries Phosphoserine. Tyr-2824 is modified (phosphotyrosine). Basic and acidic residues predominate over residues 2825–2843 (SKEEIQSEIKNHDDSRGDA). Residues Lys-2826 and Lys-2862 each carry the N6-acetyllysine modification. A disordered region spans residues 2920–2953 (EKCDDSDIRPSGSSPPSLPISPSTHGSSLPPTLI). Residues 2929–2942 (PSGSSPPSLPISPS) are compositionally biased toward low complexity. Coiled coils occupy residues 3047 to 3074 (LLQDLLDQERQEQQQQRQMQAMIRQRSE) and 3166 to 3193 (NDSQRKQYEEWLQETQQLLQMQQKYLEE). The segment covering 3198–3214 (HRKSKKALSAKQRTAKK) has biased composition (basic residues). The interval 3198–3223 (HRKSKKALSAKQRTAKKAGREFPEED) is disordered. Coiled-coil stretches lie at residues 3224-3270 (AEQL…QQCA) and 3387-3432 (FSES…QHCL). Disordered regions lie at residues 3329-3407 (PGWQ…QERQ) and 3444-3910 (SQMP…QKMA). Residues 3391–3407 (FQERERKERLREQQERQ) show a composition bias toward basic and acidic residues. Positions 3464 to 3485 (LQQSPQHQQQIGPVLQQQNVQQ) are enriched in low complexity. 4 stretches are compositionally biased toward polar residues: residues 3486–3503 (GSVNSPPNQTFMQTNEQR), 3515–3524 (PSASGGSPNF), 3557–3586 (PVANSNVPCGQDPAVTQGQNYSGSSQSLIQ), and 3632–3647 (LSETTSTPAVSSPSEL). 2 stretches are compositionally biased toward basic and acidic residues: residues 3697–3739 (AEAD…KIKD) and 3795–3804 (SSTKDGKLIE). An N6-acetyllysine modification is found at Lys-3709. The span at 3871 to 3885 (MYSSSDSFTHLKQQN) shows a compositional bias: polar residues. The segment covering 3890–3904 (PPTPPASLPPTPPPM) has biased composition (pro residues). At Ser-4027 the chain carries Phosphoserine. Arg-4132 is modified (asymmetric dimethylarginine). The tract at residues 4159–4184 (PNVPFPPTSNGLSGYKDSSHGPAEGA) is disordered. Ser-4260 carries the phosphoserine modification. The C2HC pre-PHD-type 2 zinc-finger motif lies at 4391–4431 (CRKCCFCHEEGDGLTDGPARLLNLDLDLWVHLNCALWSTEV). The PHD-type 8 zinc-finger motif lies at 4452–4499 (MKCVFCHKTGATSGCHRFRCTNIYHFTCATKAQCMFFKDKTMLCPMHK). Residues 4537 to 4597 (DHTFRVGSLI…CRYLCSIEEK (61 aa)) form the FYR N-terminal domain. The 86-residue stretch at 4598–4683 (DGRPVFVIRI…EACENYTFRY (86 aa)) folds into the FYR C-terminal domain. Positions 4699–4704 (GCARSE) match the WDR5 interaction motif (WIN) motif. In terms of domain architecture, SET spans 4763-4879 (SNVYLARSRI…KGEELCYDYK (117 aa)). Residues Tyr-4817 and 4840–4841 (NH) each bind S-adenosyl-L-methionine. Cys-4843, Cys-4891, Cys-4893, and Cys-4898 together coordinate Zn(2+). One can recognise a Post-SET domain in the interval 4887 to 4903 (HKIPCHCGAVNCRKWMN).

This sequence belongs to the class V-like SAM-binding methyltransferase superfamily. Histone-lysine methyltransferase family. TRX/MLL subfamily. Component of the MLL3 complex (also named ASCOM complex), at least composed of catalytic subunit KMT2C/MLL3, ASH2L, RBBP5, WDR5, NCOA6, DPY30, KDM6A, PAXIP1/PTIP, PAGR1 and alpha- and beta-tubulin. Forms a core complex with the evolutionary conserved subcomplex WRAD composed of WDR5, RBBP5, ASH2L/ASH2 and DPY30 subunits; WRAD differentially stimulates the methyltransferase activity. Interacts (via WIN motif) with WDR5. In terms of tissue distribution, in adult, detected in testis, kidney, spleen and lung, weakly expressed in brain and absent in heart and liver. First detected throughout the embryo at 8 dpc when expression is strong in forebrain neuroepithelium and absent in heart. Expressed in the eye lens between 10 and 14.5 dpc. By 13 dpc, expressed strongly in spinal cord, hand/foot plates and gonads.

It is found in the nucleus. The catalysed reaction is L-lysyl(4)-[histone H3] + S-adenosyl-L-methionine = N(6)-methyl-L-lysyl(4)-[histone H3] + S-adenosyl-L-homocysteine + H(+). Functionally, histone methyltransferase that catalyzes methyl group transfer from S-adenosyl-L-methionine to the epsilon-amino group of 'Lys-4' of histone H3 (H3K4). Part of chromatin remodeling machinery predominantly forms H3K4me1 methylation marks at active chromatin sites where transcription and DNA repair take place. Likely plays a redundant role with KMT2D in enriching H3K4me1 mark on primed and active enhancer elements. The sequence is that of Histone-lysine N-methyltransferase 2C (Kmt2c) from Mus musculus (Mouse).